The following is a 311-amino-acid chain: Coproporphyrin III ferrochelatase 1 (311 aa).

Fe-coproporphyrin III is bound by residues tyrosine 12, arginine 29, 45–46 (RY), serine 53, and tyrosine 124. Residues histidine 182 and glutamate 263 each coordinate Fe(2+).

Belongs to the ferrochelatase family.

The protein localises to the cytoplasm. The enzyme catalyses Fe-coproporphyrin III + 2 H(+) = coproporphyrin III + Fe(2+). The protein operates within porphyrin-containing compound metabolism; protoheme biosynthesis. In terms of biological role, involved in coproporphyrin-dependent heme b biosynthesis. Catalyzes the insertion of ferrous iron into coproporphyrin III to form Fe-coproporphyrin III. This chain is Coproporphyrin III ferrochelatase 1, found in Bacillus cereus (strain ZK / E33L).